The sequence spans 151 residues: Small heat shock protein HspD (151 aa).

The region spanning 28–138 (RATEDNYPPY…KPRRIAINGA (111 aa)) is the sHSP domain.

The protein belongs to the small heat shock protein (HSP20) family.

This chain is Small heat shock protein HspD (hspD), found in Bradyrhizobium diazoefficiens (strain JCM 10833 / BCRC 13528 / IAM 13628 / NBRC 14792 / USDA 110).